We begin with the raw amino-acid sequence, 444 residues long: Tubulin beta chain (444 aa).

The short motif at 1 to 4 (MREI) is the MREI motif element. Glutamine 11 is a GTP binding site. Serine 40 carries the post-translational modification Phosphoserine. A Phosphothreonine modification is found at threonine 55. Lysine 58 carries the post-translational modification N6-acetyllysine; alternate. Lysine 58 carries the post-translational modification N6-succinyllysine; alternate. Lysine 58 is covalently cross-linked (Glycyl lysine isopeptide (Lys-Gly) (interchain with G-Cter in ubiquitin); alternate). 5 residues coordinate GTP: glutamate 69, serine 138, glycine 142, threonine 143, and glycine 144. Glutamate 69 lines the Mg(2+) pocket. A Phosphoserine; by CDK1 modification is found at serine 172. GTP contacts are provided by asparagine 204 and asparagine 226. Residues threonine 285 and threonine 290 each carry the phosphothreonine modification. Arginine 318 is subject to Omega-N-methylarginine. A Glycyl lysine isopeptide (Lys-Gly) (interchain with G-Cter in ubiquitin) cross-link involves residue lysine 324. The disordered stretch occupies residues 423–444 (QQYQDATAEEEEDFGEEAEEEA). Acidic residues predominate over residues 429 to 444 (TAEEEEDFGEEAEEEA). 4 positions are modified to 5-glutamyl polyglutamate: glutamate 434, glutamate 438, glutamate 439, and glutamate 441. 5-glutamyl glycine is present on residues glutamate 438, glutamate 439, glutamate 441, glutamate 442, and glutamate 443.

The protein belongs to the tubulin family. Heterodimer of alpha and beta chains. A typical microtubule is a hollow water-filled tube with an outer diameter of 25 nm and an inner diameter of 15 nM. Alpha-beta heterodimers associate head-to-tail to form protofilaments running lengthwise along the microtubule wall with the beta-tubulin subunit facing the microtubule plus end conferring a structural polarity. Microtubules usually have 13 protofilaments but different protofilament numbers can be found in some organisms and specialized cells. Interacts with CIMAP3. Interacts with DIAPH1. Interacts with MX1. May interact with RNABP10. Interacts with CFAP157. Nascent tubulin polypeptide interacts (via beta-tubulin MREI motif) with TTC5/STRAP; this interaction results in tubulin mRNA-targeted degradation. Mg(2+) serves as cofactor. In terms of processing, some glutamate residues at the C-terminus are polyglycylated, resulting in polyglycine chains on the gamma-carboxyl group. Glycylation is mainly limited to tubulin incorporated into axonemes (cilia and flagella) whereas glutamylation is prevalent in neuronal cells, centrioles, axonemes, and the mitotic spindle. Both modifications can coexist on the same protein on adjacent residues, and lowering polyglycylation levels increases polyglutamylation, and reciprocally. Cilia and flagella glycylation is required for their stability and maintenance. Flagella glycylation controls sperm motility. Some glutamate residues at the C-terminus are polyglutamylated, resulting in polyglutamate chains on the gamma-carboxyl group. Polyglutamylation plays a key role in microtubule severing by spastin (SPAST). SPAST preferentially recognizes and acts on microtubules decorated with short polyglutamate tails: severing activity by SPAST increases as the number of glutamates per tubulin rises from one to eight, but decreases beyond this glutamylation threshold. Glutamylation is also involved in cilia motility. Post-translationally, phosphorylated on Ser-172 by CDK1 during the cell cycle, from metaphase to telophase, but not in interphase. This phosphorylation inhibits tubulin incorporation into microtubules.

Its subcellular location is the cytoplasm. The protein resides in the cytoskeleton. Functionally, tubulin is the major constituent of microtubules, a cylinder consisting of laterally associated linear protofilaments composed of alpha- and beta-tubulin heterodimers. Microtubules grow by the addition of GTP-tubulin dimers to the microtubule end, where a stabilizing cap forms. Below the cap, tubulin dimers are in GDP-bound state, owing to GTPase activity of alpha-tubulin. The polypeptide is Tubulin beta chain (TUBB) (Sus scrofa (Pig)).